Here is a 344-residue protein sequence, read N- to C-terminus: MVKRNLILAFESSCDETSVSVIEDGHRVLSNIVATQIASHQRFGGVVPEVASRHHIEQITKCTKEALEQAGVSYQDLTAVAVTYGPGLVGSLLIGVTAAKTIAWAHQLPLVPVNHMAGHLYAARFVSDFTYPMLGLLVSGGHTELVYMKEEHDYQIIGETRDDAAGEAYDKVGRVMGINYPAGKTVDQWAAKGHDTFHFPRAMEKEDNFDFSFSGLKSAFINTVHNADQRGEVLDKYDLAASFQQSVVDVLVAKTIRALDEFPVKQLILAGGVAANQGLRKQLSAGLQAKHPEVQLLQAPLKYCGDNAAMIGAAGYVNYLHGDRADGSLNAVPGLSFAHLKEEN.

Fe cation-binding residues include His115 and His119. Residues Leu137 to Gly141, Asp170, Gly183, Asp187, and Asn276 each bind substrate. Asp306 contacts Fe cation.

This sequence belongs to the KAE1 / TsaD family. It depends on Fe(2+) as a cofactor.

The protein localises to the cytoplasm. It catalyses the reaction L-threonylcarbamoyladenylate + adenosine(37) in tRNA = N(6)-L-threonylcarbamoyladenosine(37) in tRNA + AMP + H(+). Required for the formation of a threonylcarbamoyl group on adenosine at position 37 (t(6)A37) in tRNAs that read codons beginning with adenine. Is involved in the transfer of the threonylcarbamoyl moiety of threonylcarbamoyl-AMP (TC-AMP) to the N6 group of A37, together with TsaE and TsaB. TsaD likely plays a direct catalytic role in this reaction. The protein is tRNA N6-adenosine threonylcarbamoyltransferase of Limosilactobacillus fermentum (strain NBRC 3956 / LMG 18251) (Lactobacillus fermentum).